Reading from the N-terminus, the 374-residue chain is Calcium/calmodulin-dependent protein kinase type 1 (374 aa).

In terms of domain architecture, Protein kinase spans 20-276; that stretch reads YDFRDVLGTG…CEQALQHPWI (257 aa). ATP-binding positions include 26-34 and Lys-49; that span reads LGTGAFSEV. Lys-59 participates in a covalent cross-link: Glycyl lysine isopeptide (Lys-Gly) (interchain with G-Cter in ubiquitin). The Proton acceptor role is filled by Asp-141. The residue at position 177 (Thr-177) is a Phosphothreonine; by CaMKK1 and CaMKK2. An autoinhibitory domain region spans residues 276–316; sequence IAGDTALDKNIHQSVSEQIKKNFAKSKWKQAFNATAVVRHM. The tract at residues 296–317 is calmodulin-binding; the sequence is KNFAKSKWKQAFNATAVVRHMR. Positions 315–321 match the Nuclear export signal motif; that stretch reads HMRKLQL.

It belongs to the protein kinase superfamily. CAMK Ser/Thr protein kinase family. CaMK subfamily. Monomer. Interacts with XPO1. In terms of processing, phosphorylated by CaMKK1 and CaMKK2 on Thr-177. Polybiquitinated by the E3 ubiquitin-protein ligase complex SCF(FBXL12), leading to proteasomal degradation. Ubiquitous.

The protein resides in the cytoplasm. It localises to the nucleus. The enzyme catalyses L-seryl-[protein] + ATP = O-phospho-L-seryl-[protein] + ADP + H(+). It carries out the reaction L-threonyl-[protein] + ATP = O-phospho-L-threonyl-[protein] + ADP + H(+). With respect to regulation, activated by Ca(2+)/calmodulin. Binding of calmodulin results in conformational change that relieves intrasteric autoinhibition and allows phosphorylation of Thr-177 within the activation loop by CaMKK1 or CaMKK2. Phosphorylation of Thr-177 results in several fold increase in total activity. Unlike CaMK4, is unable to exhibit autonomous activity after Ca(2+)/calmodulin activation. Its function is as follows. Calcium/calmodulin-dependent protein kinase that operates in the calcium-triggered CaMKK-CaMK1 signaling cascade and, upon calcium influx, regulates transcription activators activity, cell cycle, hormone production, cell differentiation, actin filament organization and neurite outgrowth. Recognizes the substrate consensus sequence [MVLIF]-x-R-x(2)-[ST]-x(3)-[MVLIF]. Regulates axonal extension and growth cone motility in hippocampal and cerebellar nerve cells. Upon NMDA receptor-mediated Ca(2+) elevation, promotes dendritic growth in hippocampal neurons and is essential in synapses for full long-term potentiation (LTP) and ERK2-dependent translational activation. Downstream of NMDA receptors, promotes the formation of spines and synapses in hippocampal neurons by phosphorylating ARHGEF7/BETAPIX on 'Ser-673', which results in the enhancement of ARHGEF7 activity and activation of RAC1. Promotes neuronal differentiation and neurite outgrowth by activation and phosphorylation of MARK2 on 'Ser-91', 'Ser-92', 'Ser-93' and 'Ser-294'. Promotes nuclear export of HDAC5 and binding to 14-3-3 by phosphorylation of 'Ser-259' and 'Ser-498' in the regulation of muscle cell differentiation. Regulates NUMB-mediated endocytosis by phosphorylation of NUMB on 'Ser-276' and 'Ser-295'. Involved in the regulation of basal and estrogen-stimulated migration of medulloblastoma cells through ARHGEF7/BETAPIX phosphorylation. Is required for proper activation of cyclin-D1/CDK4 complex during G1 progression in diploid fibroblasts. Plays a role in K(+) and ANG2-mediated regulation of the aldosterone synthase (CYP11B2) to produce aldosterone in the adrenal cortex. Phosphorylates EIF4G3/eIF4GII. In vitro phosphorylates CREB1, ATF1, CFTR, MYL9 and SYN1/synapsin I. This is Calcium/calmodulin-dependent protein kinase type 1 (Camk1) from Mus musculus (Mouse).